The chain runs to 350 residues: Small ribosomal subunit biogenesis GTPase RsgA (350 aa).

The span at 1 to 17 (MSKNKLSKGQQRRVQAN) shows a compositional bias: polar residues. Residues 1–35 (MSKNKLSKGQQRRVQANHQRRLRTDRKPELDDSQL) are disordered. The CP-type G domain maps to 103-273 (TSVLTRPDLY…VIDSPGVREF (171 aa)). GTP-binding positions include 159-162 (NKID) and 213-221 (GQSGVGKSS). Positions 297, 302, 304, and 310 each coordinate Zn(2+).

It belongs to the TRAFAC class YlqF/YawG GTPase family. RsgA subfamily. As to quaternary structure, monomer. Associates with 30S ribosomal subunit, binds 16S rRNA. It depends on Zn(2+) as a cofactor.

The protein resides in the cytoplasm. Functionally, one of several proteins that assist in the late maturation steps of the functional core of the 30S ribosomal subunit. Helps release RbfA from mature subunits. May play a role in the assembly of ribosomal proteins into the subunit. Circularly permuted GTPase that catalyzes slow GTP hydrolysis, GTPase activity is stimulated by the 30S ribosomal subunit. In Yersinia pseudotuberculosis serotype O:1b (strain IP 31758), this protein is Small ribosomal subunit biogenesis GTPase RsgA.